Reading from the N-terminus, the 234-residue chain is Zinc transport system ATP-binding protein AdcC (234 aa).

The ABC transporter domain occupies 4–234 (ITVEDLSFYY…HENGQEVGHA (231 aa)). 36-43 (GENGAAKT) contacts ATP.

The protein belongs to the ABC transporter superfamily.

In terms of biological role, part of the ATP-driven transport system AdcABC for zinc. Required for transformability. The protein is Zinc transport system ATP-binding protein AdcC (adcC) of Streptococcus pneumoniae (strain ATCC BAA-255 / R6).